The sequence spans 326 residues: Transposase InsH for insertion sequence element IS5H (326 aa).

The protein belongs to the transposase 11 family.

In terms of biological role, involved in the transposition of the insertion sequence IS5. The protein is Transposase InsH for insertion sequence element IS5H (insH6) of Escherichia coli (strain K12).